A 177-amino-acid polypeptide reads, in one-letter code: CASP-like protein 2U1 (177 aa).

The helical transmembrane segment at 1 to 21 (MVLRIVASLLSIAALVLMAKD) threads the bilayer. Over 22-48 (KQVVYLNLAGEELTLEAKHSYVEAFVY) the chain is Cytoplasmic. The helical transmembrane segment at 49-69 (LVYSNGLVAIYCFLLVFALVF) threads the bilayer. The Extracellular portion of the chain corresponds to 70-80 (RLIDKAGCGKS). The chain crosses the membrane as a helical span at residues 81-101 (AAWIIFLLDQGLAYVLLAAAA). Residues 102-131 (ASTEVAYVAKRGNNKVGWSEVCSTFGHFCN) are Cytoplasmic-facing. The chain crosses the membrane as a helical span at residues 132–152 (LVGVSIVITFISVLAMATLSV). Residues 153 to 177 (MSARRLFKTYGPERKQISSNDAPAI) are Extracellular-facing.

This sequence belongs to the Casparian strip membrane proteins (CASP) family. In terms of assembly, homodimer and heterodimers.

It is found in the cell membrane. This is CASP-like protein 2U1 from Osmunda lancea (Fern).